Consider the following 179-residue polypeptide: Large ribosomal subunit protein uL5 (179 aa).

The protein belongs to the universal ribosomal protein uL5 family. In terms of assembly, part of the 50S ribosomal subunit; part of the 5S rRNA/L5/L18/L25 subcomplex. Contacts the 5S rRNA and the P site tRNA. Forms a bridge to the 30S subunit in the 70S ribosome.

Its function is as follows. This is one of the proteins that bind and probably mediate the attachment of the 5S RNA into the large ribosomal subunit, where it forms part of the central protuberance. In the 70S ribosome it contacts protein S13 of the 30S subunit (bridge B1b), connecting the 2 subunits; this bridge is implicated in subunit movement. Contacts the P site tRNA; the 5S rRNA and some of its associated proteins might help stabilize positioning of ribosome-bound tRNAs. In Cronobacter sakazakii (strain ATCC BAA-894) (Enterobacter sakazakii), this protein is Large ribosomal subunit protein uL5.